A 338-amino-acid chain; its full sequence is Ferredoxin--NADP reductase (338 aa).

7 residues coordinate FAD: D38, Q46, Y51, V91, F125, D291, and T331.

It belongs to the ferredoxin--NADP reductase type 2 family. Homodimer. FAD is required as a cofactor.

It catalyses the reaction 2 reduced [2Fe-2S]-[ferredoxin] + NADP(+) + H(+) = 2 oxidized [2Fe-2S]-[ferredoxin] + NADPH. The protein is Ferredoxin--NADP reductase of Orientia tsutsugamushi (strain Ikeda) (Rickettsia tsutsugamushi).